Here is a 255-residue protein sequence, read N- to C-terminus: Lipoprotein-releasing system ATP-binding protein LolD 2 (255 aa).

The ABC transporter domain occupies 9 to 254 (LEARGIRKSY…SDSAKLETVA (246 aa)). Position 45–52 (45–52 (GRSGSGKS)) interacts with ATP.

The protein belongs to the ABC transporter superfamily. Lipoprotein translocase (TC 3.A.1.125) family. As to quaternary structure, the complex is composed of two ATP-binding proteins (LolD) and two transmembrane proteins (LolC and LolE).

Its subcellular location is the cell inner membrane. Its function is as follows. Part of the ABC transporter complex LolCDE involved in the translocation of mature outer membrane-directed lipoproteins, from the inner membrane to the periplasmic chaperone, LolA. Responsible for the formation of the LolA-lipoprotein complex in an ATP-dependent manner. This is Lipoprotein-releasing system ATP-binding protein LolD 2 from Rhodopirellula baltica (strain DSM 10527 / NCIMB 13988 / SH1).